Here is an 89-residue protein sequence, read N- to C-terminus: Small ribosomal subunit protein uS15 (89 aa).

Belongs to the universal ribosomal protein uS15 family. In terms of assembly, part of the 30S ribosomal subunit. Forms a bridge to the 50S subunit in the 70S ribosome, contacting the 23S rRNA.

Its function is as follows. One of the primary rRNA binding proteins, it binds directly to 16S rRNA where it helps nucleate assembly of the platform of the 30S subunit by binding and bridging several RNA helices of the 16S rRNA. In terms of biological role, forms an intersubunit bridge (bridge B4) with the 23S rRNA of the 50S subunit in the ribosome. This is Small ribosomal subunit protein uS15 from Geobacillus stearothermophilus (Bacillus stearothermophilus).